Consider the following 248-residue polypeptide: ATP synthase subunit a (248 aa).

A run of 5 helical transmembrane segments spans residues Gly31–Gly51, Val90–Phe110, Ile129–Ser149, Val195–Phe215, and Leu216–Glu236.

It belongs to the ATPase A chain family. In terms of assembly, F-type ATPases have 2 components, CF(1) - the catalytic core - and CF(0) - the membrane proton channel. CF(1) has five subunits: alpha(3), beta(3), gamma(1), delta(1), epsilon(1). CF(0) has four main subunits: a, b, b' and c.

It is found in the cellular thylakoid membrane. Key component of the proton channel; it plays a direct role in the translocation of protons across the membrane. The sequence is that of ATP synthase subunit a from Synechococcus sp. (strain JA-3-3Ab) (Cyanobacteria bacterium Yellowstone A-Prime).